We begin with the raw amino-acid sequence, 690 residues long: MGTVRSRRLWWPLPLLLLLLLGPAGARAQEDDDGDYEELVLALRSEEDGLAEALQHGATATFHRCAKDPWRLPGTYVVVLKEETQRLQPERTARRLQAQAARRGYLIKLLHVFHDLLPGFLVKMSRDLLELALRLPHVDYIEEDSYVFAQSIPWNLERITPARYRADEYQPPNGGSLVEVYLLDTSIQSGHREIEGRVMVTDFESVPEEDGTRFHRQASKCDSHGTHLAGVVSGRDAGVAKGASLRSLRVLNCQGKGTVSSTLIGLEFIRKNQLVQPVGPLVVLLPLAGGYSRVLNAACQRLARAGVVLVAAAGNFRDDACLYSPASAPEVITVGATNAQDQPVTLGTLGTNFGRCVDLFAPGEDIIGASSDCSTCFVSQSGTSQAAAHVAGIAAMMLSAEPELTLAELRQRLIHFSAKDVINEAWFPEDQRVLTPNLVAALPPSTHGAGWQLFCRTVWSAHSGPTRMATAMARCAPDEELLSCSSFSRSGKRRGERIEAQGGKLVCRAHNAFGGEGVYAIARCCLLPQANCSVHTAPPAGTGMGTRVHCHQQGHVLTGCSSHWEVEDLGTHKPPVLRPRVQPDQCMGHSGASTHASCCHAPGLECKVKEHGLPAPQEQVTVACEEGWTLTGCSALPGTSHVLGAYAVDDTCVVRSRDVGTTGNISEEAVTAVAICCRSWHLAQASQELQ.

An N-terminal signal peptide occupies residues 1-28; sequence MGTVRSRRLWWPLPLLLLLLLGPAGARA. The propeptide occupies 29–150; sequence QEDDDGDYEE…IEEDSYVFAQ (122 aa). The residue at position 36 (tyrosine 36) is a Sulfotyrosine. The residue at position 45 (serine 45) is a Phosphoserine. The 73-residue stretch at 75–147 folds into the Inhibitor I9 domain; the sequence is TYVVVLKEET…VDYIEEDSYV (73 aa). One can recognise a Peptidase S8 domain in the interval 153–459; sequence PWNLERITPA…GWQLFCRTVW (307 aa). Catalysis depends on charge relay system residues aspartate 184 and histidine 224. 2 cysteine pairs are disulfide-bonded: cysteine 221/cysteine 253 and cysteine 321/cysteine 356. Serine 384 (charge relay system) is an active-site residue. Residues 448-690 are C-terminal domain; that stretch reads GAGWQLFCRT…HLAQASQELQ (243 aa). 3 cysteine pairs are disulfide-bonded: cysteine 455–cysteine 525, cysteine 475–cysteine 524, and cysteine 484–cysteine 507. Asparagine 531 is a glycosylation site (N-linked (GlcNAc...) asparagine). Cystine bridges form between cysteine 532-cysteine 599, cysteine 550-cysteine 598, cysteine 560-cysteine 586, cysteine 606-cysteine 677, cysteine 624-cysteine 676, and cysteine 633-cysteine 652. Serine 686 carries the post-translational modification Phosphoserine.

This sequence belongs to the peptidase S8 family. As to quaternary structure, monomer. Can self-associate to form dimers and higher multimers which may have increased LDLR degrading activity. The precursor protein but not the mature protein may form multimers. Interacts with APOB, VLDLR, LRP8/APOER2 and BACE1. The full-length immature form (pro-PCSK9) interacts with SCNN1A, SCNN1B and SCNN1G. The pro-PCSK9 form (via C-terminal domain) interacts with LDLR. Interacts (via the C-terminal domain) with ANXA2 (via repeat Annexin 1); the interaction inhibits the degradation of LDLR. It depends on Ca(2+) as a cofactor. Post-translationally, cleavage by furin and PCSK5 generates a truncated inactive protein that is unable to induce LDLR degradation. Undergoes autocatalytic cleavage in the endoplasmic reticulum to release the propeptide from the N-terminus and the cleavage of the propeptide is strictly required for its maturation and activation. The cleaved propeptide however remains associated with the catalytic domain through non-covalent interactions, preventing potential substrates from accessing its active site. As a result, it is secreted from cells as a propeptide-containing, enzymatically inactive protein. In terms of processing, phosphorylation protects the propeptide against proteolysis.

Its subcellular location is the cytoplasm. It localises to the secreted. The protein localises to the endosome. It is found in the lysosome. The protein resides in the cell surface. Its subcellular location is the endoplasmic reticulum. It localises to the golgi apparatus. With respect to regulation, its proteolytic activity is autoinhibited by the non-covalent binding of the propeptide to the catalytic domain. Inhibited by EGTA. Functionally, crucial player in the regulation of plasma cholesterol homeostasis. Binds to low-density lipid receptor family members: low density lipoprotein receptor (LDLR), very low density lipoprotein receptor (VLDLR), apolipoprotein E receptor (LRP1/APOER) and apolipoprotein receptor 2 (LRP8/APOER2), and promotes their degradation in intracellular acidic compartments. Acts via a non-proteolytic mechanism to enhance the degradation of the hepatic LDLR through a clathrin LDLRAP1/ARH-mediated pathway. May prevent the recycling of LDLR from endosomes to the cell surface or direct it to lysosomes for degradation. Can induce ubiquitination of LDLR leading to its subsequent degradation. Inhibits intracellular degradation of APOB via the autophagosome/lysosome pathway in a LDLR-independent manner. Involved in the disposal of non-acetylated intermediates of BACE1 in the early secretory pathway. Inhibits epithelial Na(+) channel (ENaC)-mediated Na(+) absorption by reducing ENaC surface expression primarily by increasing its proteasomal degradation. Regulates neuronal apoptosis via modulation of LRP8/APOER2 levels and related anti-apoptotic signaling pathways. The polypeptide is Proprotein convertase subtilisin/kexin type 9 (PCSK9) (Lagothrix lagotricha (Brown woolly monkey)).